A 685-amino-acid chain; its full sequence is Amino acid transporter heavy chain SLC3A1 (685 aa).

The segment covering 1-10 (MDEDKGKRDP) has biased composition (basic and acidic residues). A disordered region spans residues 1–53 (MDEDKGKRDPIQMSLKGCRTNNGFVQNEDIPEQDPDPGSRDTPQPNAVSIPAP). Residues 1–88 (MDEDKGKRDP…ARYRVPREIL (88 aa)) lie on the Cytoplasmic side of the membrane. The helical; Signal-anchor for type II membrane protein transmembrane segment at 89-109 (FWLTVVSVFLLIGATIAIIVI) threads the bilayer. Residues 110 to 685 (SPKCLDWWQA…SALDILYSSC (576 aa)) are Extracellular-facing. Ca(2+) is bound at residue N213. N-linked (GlcNAc...) asparagine glycosylation is found at N213, N240, and N260. C241 and C272 are disulfide-bonded. Residues D283, F317, L318, and E320 each contribute to the Ca(2+) site. N331 is a glycosylation site (N-linked (GlcNAc...) asparagine). S385 bears the Phosphoserine mark. N512 and N522 each carry an N-linked (GlcNAc...) asparagine glycan. 2 cysteine pairs are disulfide-bonded: C570/C666 and C673/C685.

In terms of assembly, disulfide-linked heterodimer composed of the catalytic light subunit SLC7A9 and the heavy subunit SLC3A1. The heterodimer is the minimal functional unit. Assembles in non-covalently linked heterotetramers (dimers of heterodimers) and higher order oligomers; the oligomerization is mediated by SLC3A1 likely to prevent degradation in the endoplasmic reticulum and facilitate heteromer trafficking to the plasma membrane. Disulfide-linked heterodimer composed of the catalytic light subunit SLC7A13 and the heavy subunit SLC3A1. As to expression, expressed in the brush border membrane in the kidney (at protein level). Highly expressed in renal tubules in the outer stripe of the outer medulla and medullary ray (at protein level). Also detected in the renal cortex. More abundant in male than female kidneys.

The protein resides in the cell membrane. It localises to the apical cell membrane. Functionally, acts as a chaperone that facilitates biogenesis and trafficking of functional transporter heteromers to the plasma membrane. Associates with SLC7A9 to form a functional transporter complex that mediates the electrogenic exchange between cationic amino acids and neutral amino acids, with a stoichiometry of 1:1. SLC7A9-SLC3A1 transporter has system b(0,+)-like activity with high affinity for extracellular cationic amino acids and L-cystine and lower affinity for intracellular neutral amino acids. Substrate exchange is driven by high concentration of intracellular neutral amino acids and the intracellular reduction of L-cystine to L-cysteine. SLC7A9-SLC3A1 acts as a major transporter for reabsorption of L-cystine and dibasic amino acids across the brush border membrane in early proximal tubules. Associates with SLC7A13 to form a functional complex that transports anionic and neutral amino acids via exchange or facilitated diffusion. SLC7A13-SLC3A1 may act as a major transporter for L-cystine in late proximal tubules, ensuring its reabsorption from the luminal fluid in exchange for cytosolic L-glutamate or L-aspartate. In Mus musculus (Mouse), this protein is Amino acid transporter heavy chain SLC3A1.